A 535-amino-acid chain; its full sequence is Succinate-semialdehyde dehydrogenase, mitochondrial (535 aa).

The N-terminal 47 residues, Met-1–Tyr-47, are a transit peptide targeting the mitochondrion. Position 126 is an N6-acetyllysine; alternate (Lys-126). Residue Lys-126 is modified to N6-succinyllysine; alternate. N6-succinyllysine occurs at positions 135 and 184. An NAD(+)-binding site is contributed by Thr-202–Trp-204. Position 213 (Arg-213) interacts with substrate. Residue Lys-228–Glu-231 participates in NAD(+) binding. At Lys-265 the chain carries N6-acetyllysine; alternate. An N6-succinyllysine; alternate modification is found at Lys-265. NAD(+)-binding positions include Gly-284 to Gly-289 and Glu-306. The active-site Proton acceptor is Glu-306. Arg-334 serves as a coordination point for substrate. The Nucleophile role is filled by Cys-340. Cys-340 and Cys-342 are joined by a disulfide. Lys-365 is modified (N6-acetyllysine). Residue Lys-402 is modified to N6-succinyllysine. Lys-411 carries the post-translational modification N6-acetyllysine. Glu-438–Phe-440 serves as a coordination point for NAD(+). A substrate-binding site is contributed by Ser-498. Ser-499 carries the phosphoserine modification.

This sequence belongs to the aldehyde dehydrogenase family. In terms of assembly, homotetramer. In terms of tissue distribution, brain, pancreas, heart, liver, skeletal muscle and kidney. Lower in placenta.

It localises to the mitochondrion. The enzyme catalyses succinate semialdehyde + NAD(+) + H2O = succinate + NADH + 2 H(+). The protein operates within amino-acid degradation; 4-aminobutanoate degradation. With respect to regulation, redox-regulated. Inhibited under oxydizing conditions. Inhibited by hydrogen peroxide H(2)O(2). Catalyzes one step in the degradation of the inhibitory neurotransmitter gamma-aminobutyric acid (GABA). This Homo sapiens (Human) protein is Succinate-semialdehyde dehydrogenase, mitochondrial.